Here is a 149-residue protein sequence, read N- to C-terminus: Decarboxylase AgnL1 (149 aa).

The region spanning 30–125 (PGMSEEDYRH…VGDHEKFADT (96 aa)) is the EthD domain.

The protein belongs to the tpcK family.

It catalyses the reaction atrochrysone carboxylate + H(+) = atrochrysone + CO2. It functions in the pathway secondary metabolite biosynthesis. Its function is as follows. Decarboxylase; part of the gene cluster that mediates the biosynthesis of agnestins, dihydroxy-xanthone metabolites. The pathway begins with the assembly and cyclization of atrochrysone thioester by the non-reducing polyketide synthase Agnpks1. The atrochrysone carboxyl ACP thioesterase AgnL7 then breaks the thioester bond and releases the atrochrysone carboxylic acid as the first enzyme-free intermediate. The decarboxylase AgnL1 then catalyzes the concerted decarboxylation-elimination required to convert atochrysone carboxylic acid into emodin anthrone, which is further oxidized to emodin by the anthrone oxygenase AgnL2. Emodin then undergoes reduction catalyzed by the oxidoreductase AgnL4 to yield the dihydroquinone tautomer which is the substrate for reduction by the short chain dehydrogenase AgnL6 reduction to produce hydroxyketone, followed by AgnL8 dehydration and likely spontaneous autoxidation to chrysophanol. Baeyer-Villiger oxidation by the oxidase AgnL3 leads to monodictyphenone via cleavage of the C-10/C-10a bond of chrysophanol. Alternative cleavage at the C-4a/C-10 bond of chrysophanol also leads to the formation some cephalone F. Further conversion to agnestins A and B, requires reduction to dihydro-monodictyphenone, oxidation to agnestin C probably via an epoxide, and rearrangement to either agnestin A or agnestin B directly, although agnestin A or agnestin B can also interconvert. Within the cluster, AgnR1 is the only unassigned oxidoreductase present which could be involved in this conversion. However, AgnR1 seems not to be involved in this step, and thus genes involved in the proposed oxidation/reduction may be located elsewhere on the genome. Further agnestin A derivatives are probably formed by spontaneous decarboxylations, dehydrations and methanolysis reactions. The protein is Decarboxylase AgnL1 of Paecilomyces divaricatus (Penicillium divaricatum).